A 208-amino-acid polypeptide reads, in one-letter code: Riboflavin synthase (208 aa).

Lumazine-binding repeat units lie at residues 1–97 (MFTG…MGGH) and 98–195 (FVQG…EKLV). 2,4-dihydroxypteridine-binding positions include 4-6 (GLV), 48-50 (CLT), 62-67 (GIAPES), 101-103 (GHV), K137, 146-148 (SLT), and 160-165 (MMISYT).

As to quaternary structure, homotrimer.

It carries out the reaction 2 6,7-dimethyl-8-(1-D-ribityl)lumazine + H(+) = 5-amino-6-(D-ribitylamino)uracil + riboflavin. It participates in cofactor biosynthesis; riboflavin biosynthesis; riboflavin from 2-hydroxy-3-oxobutyl phosphate and 5-amino-6-(D-ribitylamino)uracil: step 2/2. Functionally, catalyzes the dismutation of two molecules of 6,7-dimethyl-8-ribityllumazine, resulting in the formation of riboflavin and 5-amino-6-(D-ribitylamino)uracil. This is Riboflavin synthase (rib5) from Schizosaccharomyces pombe (strain 972 / ATCC 24843) (Fission yeast).